The following is a 545-amino-acid chain: Glucose-6-phosphate isomerase (545 aa).

The Proton donor role is filled by Glu-351. Residues His-382 and Lys-510 contribute to the active site.

This sequence belongs to the GPI family.

It localises to the cytoplasm. The catalysed reaction is alpha-D-glucose 6-phosphate = beta-D-fructose 6-phosphate. Its pathway is carbohydrate biosynthesis; gluconeogenesis. It functions in the pathway carbohydrate degradation; glycolysis; D-glyceraldehyde 3-phosphate and glycerone phosphate from D-glucose: step 2/4. Catalyzes the reversible isomerization of glucose-6-phosphate to fructose-6-phosphate. In Shewanella woodyi (strain ATCC 51908 / MS32), this protein is Glucose-6-phosphate isomerase.